The following is a 219-amino-acid chain: Orotate phosphoribosyltransferase (219 aa).

Residue Lys26 coordinates 5-phospho-alpha-D-ribose 1-diphosphate. 34-35 provides a ligand contact to orotate; sequence FF. 5-phospho-alpha-D-ribose 1-diphosphate contacts are provided by residues 72 to 73, Arg98, Lys99, Lys102, His104, and 124 to 132; these read YK and DDVITAGTA. Orotate contacts are provided by Thr128 and Arg156.

The protein belongs to the purine/pyrimidine phosphoribosyltransferase family. PyrE subfamily. As to quaternary structure, homodimer. It depends on Mg(2+) as a cofactor.

The catalysed reaction is orotidine 5'-phosphate + diphosphate = orotate + 5-phospho-alpha-D-ribose 1-diphosphate. The protein operates within pyrimidine metabolism; UMP biosynthesis via de novo pathway; UMP from orotate: step 1/2. Catalyzes the transfer of a ribosyl phosphate group from 5-phosphoribose 1-diphosphate to orotate, leading to the formation of orotidine monophosphate (OMP). In Xylella fastidiosa (strain Temecula1 / ATCC 700964), this protein is Orotate phosphoribosyltransferase.